A 232-amino-acid polypeptide reads, in one-letter code: MQCIKCIEINLLQKKLGYFFHTVDLLLRALTHRSFSNKHNERLEFLGDSILNYSITNILYHRYNHMDEGDMSRIRSSLVCSRTLVELAKEFKLGNCLKLGQGELKNKGYNRESILADTVEAIIGGIFLDSNIKTIEMLIAFWYQFRLNKIDLEDKQKDPKTRLQEYLQHHHLPLPIYCINQVQGQAHDQIFIMNCQVSSLKYSVMGRGSSRRKAEQDAAENALKFLIEINND.

One can recognise an RNase III domain in the interval 9-131 (INLLQKKLGY…IIGGIFLDSN (123 aa)). Glu44 lines the Mg(2+) pocket. The active site involves Asp48. 2 residues coordinate Mg(2+): Asp117 and Glu120. Residue Glu120 is part of the active site. In terms of domain architecture, DRBM spans 158 to 228 (DPKTRLQEYL…AENALKFLIE (71 aa)).

Belongs to the ribonuclease III family. Homodimer. Requires Mg(2+) as cofactor.

The protein localises to the cytoplasm. The enzyme catalyses Endonucleolytic cleavage to 5'-phosphomonoester.. Functionally, digests double-stranded RNA. Involved in the processing of primary rRNA transcript to yield the immediate precursors to the large and small rRNAs (23S and 16S). Processes some mRNAs, and tRNAs when they are encoded in the rRNA operon. Processes pre-crRNA and tracrRNA of type II CRISPR loci if present in the organism. The protein is Ribonuclease 3 of Blochmanniella floridana.